Reading from the N-terminus, the 636-residue chain is Chaperone protein DnaK2 (636 aa).

Position 198 is a phosphothreonine; by autocatalysis (T198). Over residues 604-618 (EAGVGAPGAGPEAGT) the composition is skewed to low complexity. The segment at 604–636 (EAGVGAPGAGPEAGTSSGGGDDVIDAEFSEPEK) is disordered. Over residues 625–636 (DVIDAEFSEPEK) the composition is skewed to acidic residues.

This sequence belongs to the heat shock protein 70 family.

Functionally, acts as a chaperone. The chain is Chaperone protein DnaK2 (dnaK2) from Synechocystis sp. (strain ATCC 27184 / PCC 6803 / Kazusa).